The sequence spans 133 residues: Mediator of RNA polymerase II transcription subunit 10 (133 aa).

A compositionally biased stretch (polar residues) spans 1–13; that stretch reads MSTEASTGETPEF. The segment at 1–28 is disordered; that stretch reads MSTEASTGETPEFQSYDHRGSPTQEAMK. Positions 15 to 28 are enriched in basic and acidic residues; the sequence is SYDHRGSPTQEAMK.

This sequence belongs to the Mediator complex subunit 10 family. In terms of assembly, component of the Mediator complex.

It is found in the nucleus. Component of the Mediator complex, a coactivator involved in the regulated transcription of nearly all RNA polymerase II-dependent genes. Mediator functions as a bridge to convey information from gene-specific regulatory proteins to the basal RNA polymerase II transcription machinery. Mediator is recruited to promoters by direct interactions with regulatory proteins and serves as a scaffold for the assembly of a functional preinitiation complex with RNA polymerase II and the general transcription factors. The chain is Mediator of RNA polymerase II transcription subunit 10 (NUT2) from Phaeosphaeria nodorum (strain SN15 / ATCC MYA-4574 / FGSC 10173) (Glume blotch fungus).